We begin with the raw amino-acid sequence, 242 residues long: Linker for activation of T-cells family member 1 (242 aa).

Residues methionine 1–aspartate 4 are Extracellular-facing. A helical; Signal-anchor for type III membrane protein transmembrane segment spans residues alanine 5–valine 28. Residues cysteine 27 and cysteine 30 are each lipidated (S-palmitoyl cysteine). Residues arginine 29–asparagine 242 are Cytoplasmic-facing. Threonine 40 is subject to Phosphothreonine. Residues serine 41, serine 44, serine 87, serine 104, serine 109, and serine 112 each carry the phosphoserine modification. The disordered stretch occupies residues glutamine 78–proline 118. Polar residues predominate over residues methionine 97–asparagine 115. The tract at residues tyrosine 136–valine 139 is interaction with PLCG1. Tyrosine 175 bears the Phosphotyrosine mark. Interaction with GRB2, GRAP2 and PIK3R1 stretches follow at residues tyrosine 175–valine 178 and tyrosine 195–valine 198. Positions valine 176 to asparagine 242 are disordered. 3 positions are modified to phosphoserine: serine 199, serine 212, and serine 215. Residues glutamate 217–aspartate 234 show a composition bias toward acidic residues. The residue at position 235 (tyrosine 235) is a Phosphotyrosine.

As to quaternary structure, when phosphorylated, interacts directly with the PIK3R1 subunit of phosphoinositide 3-kinase and the SH2 domains of GRB2, GRAP, GRAP2, PLCG1 and PLCG2. Interacts indirectly with CBL, SOS, VAV, and LCP2. Interacts with SHB and SKAP2. Interacts with FCGR1A. Interacts with CLNK. Interacts with GRB2, PLCG1 and THEMIS upon TCR activation in thymocytes. Interacts with THEMIS2. Phosphorylated on tyrosines by ZAP70 upon TCR activation, or by SYK upon other immunoreceptor activation; which leads to the recruitment of multiple signaling molecules. Is one of the most prominently tyrosine-phosphorylated proteins detected following TCR engagement. May be dephosphorylated by PTPRJ. Phosphorylated by ITK leading to the recruitment of VAV1 to LAT-containing complexes. In terms of processing, palmitoylation of Cys-27 and Cys-30 is required for raft targeting and efficient phosphorylation. Post-translationally, phosphorylated on tyrosines by ZAP70 upon TCR activation, or by SYK upon other immunoreceptor activation; which leads to the recruitment of multiple signaling molecules. Is one of the most prominently tyrosine-phosphorylated proteins detected following TCR engagement. May be dephosphorylated by PTPRJ. Phosphorylated by ITK leading to the recruitment of VAV1 to LAT-containing complexes. 'Lys-63'-linked ubiquitinated by TRAF6. As to expression, expressed in T-cells and mast cells.

It localises to the cell membrane. Required for TCR (T-cell antigen receptor)- and pre-TCR-mediated signaling, both in mature T-cells and during their development. Involved in FCGR3 (low affinity immunoglobulin gamma Fc region receptor III)-mediated signaling in natural killer cells and FCER1 (high affinity immunoglobulin epsilon receptor)-mediated signaling in mast cells. Couples activation of these receptors and their associated kinases with distal intracellular events such as mobilization of intracellular calcium stores, PKC activation, MAPK activation or cytoskeletal reorganization through the recruitment of PLCG1, GRB2, GRAP2, and other signaling molecules. The protein is Linker for activation of T-cells family member 1 (Lat) of Mus musculus (Mouse).